The following is a 608-amino-acid chain: MNTPSSKTPLSHIRNFSIVAHIDHGKSTLADRLIQSTGGLAEREMSEQVLDSMDIERERGITIKAQTVRLHYKANDGETYVLNLIDTPGHVDFAYEVSRSLSACEGSLLVVDASQGVEAQTLANVYQAIDNNHELVTVLNKIDLPAAEPERIKEQIEEVIGIDASDAVLISAKTGLGIPDVLEAIVHKLPAPKSEGGDTAPLKALLVDSWYDAYLGVMVLVRVIDGTLKKGMTIRMMGTDAKYQVERVGVLTPKMVAMEALGPGEIGFITASIKEVADTRVGDTITEDKRPTAKALPGFKPAQPVVFCGLFPVDAADFEDLRSAMGKLRLNDASFSFEMESSAALGFGFRCGFLGLLHLEIIQERLEREFDLDLIATAPSVVYKLFMTDGSERELHNPADMPDVVKIAEIHEPWIRATILTPDEYLGGILKLCQDRRGIQIELTYVGTRAMLTYDLPLNEVVFDFYDRLKSISKGYASFDYQITEHKEGNLVKMSILVNGEPVDALSMMVHRMAAEKRGREMCEKLKELIPKHMFKIPIQAAIGGNVIARETISALRKDVTAKCYGGDATRKRKLLEKQKAGKKRMRQFGKVEIPQEAFIAALKMSDE.

The tr-type G domain maps to 11-193; sequence SHIRNFSIVA…AIVHKLPAPK (183 aa). Residues 23–28 and 140–143 each bind GTP; these read DHGKST and NKID.

The protein belongs to the TRAFAC class translation factor GTPase superfamily. Classic translation factor GTPase family. LepA subfamily.

The protein resides in the cell inner membrane. It carries out the reaction GTP + H2O = GDP + phosphate + H(+). Functionally, required for accurate and efficient protein synthesis under certain stress conditions. May act as a fidelity factor of the translation reaction, by catalyzing a one-codon backward translocation of tRNAs on improperly translocated ribosomes. Back-translocation proceeds from a post-translocation (POST) complex to a pre-translocation (PRE) complex, thus giving elongation factor G a second chance to translocate the tRNAs correctly. Binds to ribosomes in a GTP-dependent manner. This chain is Elongation factor 4, found in Rhizobium meliloti (strain 1021) (Ensifer meliloti).